The primary structure comprises 304 residues: Coenzyme PQQ synthesis protein B (304 aa).

The protein belongs to the PqqB family.

It functions in the pathway cofactor biosynthesis; pyrroloquinoline quinone biosynthesis. May be involved in the transport of PQQ or its precursor to the periplasm. The polypeptide is Coenzyme PQQ synthesis protein B (Ectopseudomonas mendocina (strain ymp) (Pseudomonas mendocina)).